The following is a 165-amino-acid chain: PTS system glucose-specific EIIA component (165 aa).

Residues 33 to 137 form the PTS EIIA type-1 domain; sequence DPVFAGRMMG…STITPIVITN (105 aa). The Zn(2+) site is built by His70 and His85. His85 (tele-phosphohistidine intermediate; for EIIA activity) is an active-site residue. His85 carries the phosphohistidine; by HPr modification.

Heterodimer with glycerol kinase (glpk). Zn(2+) serves as cofactor.

It localises to the cytoplasm. In terms of biological role, the phosphoenolpyruvate-dependent sugar phosphotransferase system (sugar PTS), a major carbohydrate active transport system, catalyzes the phosphorylation of incoming sugar substrates concomitantly with their translocation across the cell membrane. The enzyme II complex composed of PtsG and Crr is involved in glucose transport. This is PTS system glucose-specific EIIA component (crr) from Bacillus anthracis.